The following is a 414-amino-acid chain: 5-aminolevulinate synthase (414 aa).

Residues Arg-22, Ser-133, and Lys-152 each coordinate substrate. The pyridoxal 5'-phosphate site is built by Ser-185, His-213, and Thr-241. Lys-244 is an active-site residue. Residue Lys-244 is modified to N6-(pyridoxal phosphate)lysine. The pyridoxal 5'-phosphate site is built by Thr-273 and Thr-274. Thr-359 is a substrate binding site.

The protein belongs to the class-II pyridoxal-phosphate-dependent aminotransferase family. Homodimer. Pyridoxal 5'-phosphate is required as a cofactor.

The enzyme catalyses succinyl-CoA + glycine + H(+) = 5-aminolevulinate + CO2 + CoA. It functions in the pathway porphyrin-containing compound metabolism; protoporphyrin-IX biosynthesis; 5-aminolevulinate from glycine: step 1/1. The protein is 5-aminolevulinate synthase (hemA) of Rickettsia conorii (strain ATCC VR-613 / Malish 7).